The following is a 209-amino-acid chain: Protein GrpE (209 aa).

It belongs to the GrpE family. As to quaternary structure, homodimer.

Its subcellular location is the cytoplasm. In terms of biological role, participates actively in the response to hyperosmotic and heat shock by preventing the aggregation of stress-denatured proteins, in association with DnaK and GrpE. It is the nucleotide exchange factor for DnaK and may function as a thermosensor. Unfolded proteins bind initially to DnaJ; upon interaction with the DnaJ-bound protein, DnaK hydrolyzes its bound ATP, resulting in the formation of a stable complex. GrpE releases ADP from DnaK; ATP binding to DnaK triggers the release of the substrate protein, thus completing the reaction cycle. Several rounds of ATP-dependent interactions between DnaJ, DnaK and GrpE are required for fully efficient folding. This chain is Protein GrpE, found in Colwellia psychrerythraea (strain 34H / ATCC BAA-681) (Vibrio psychroerythus).